The primary structure comprises 509 residues: tRNA-2-methylthio-N(6)-dimethylallyladenosine synthase (509 aa).

Over residues 1 to 15 (MNEQQRLASQQVNSS) the composition is skewed to polar residues. Positions 1 to 26 (MNEQQRLASQQVNSSTKKEEKDYSKY) are disordered. Over residues 16-25 (TKKEEKDYSK) the composition is skewed to basic and acidic residues. An MTTase N-terminal domain is found at 66-184 (RKFYIRTYGC…LPYILKDAMF (119 aa)). Positions 75, 111, 145, 221, 225, and 228 each coordinate [4Fe-4S] cluster. The 231-residue stretch at 207–437 (RRGDIKAWVN…NALVNKLAIE (231 aa)) folds into the Radical SAM core domain. The TRAM domain occupies 440-503 (NRYKGQIVEV…TWSLNGELVE (64 aa)).

It belongs to the methylthiotransferase family. MiaB subfamily. Monomer. It depends on [4Fe-4S] cluster as a cofactor.

The protein localises to the cytoplasm. It carries out the reaction N(6)-dimethylallyladenosine(37) in tRNA + (sulfur carrier)-SH + AH2 + 2 S-adenosyl-L-methionine = 2-methylsulfanyl-N(6)-dimethylallyladenosine(37) in tRNA + (sulfur carrier)-H + 5'-deoxyadenosine + L-methionine + A + S-adenosyl-L-homocysteine + 2 H(+). Functionally, catalyzes the methylthiolation of N6-(dimethylallyl)adenosine (i(6)A), leading to the formation of 2-methylthio-N6-(dimethylallyl)adenosine (ms(2)i(6)A) at position 37 in tRNAs that read codons beginning with uridine. This chain is tRNA-2-methylthio-N(6)-dimethylallyladenosine synthase, found in Bacillus cereus (strain AH187).